The following is a 1090-amino-acid chain: Protein unc-13 homolog D (1090 aa).

The C2 1 domain occupies 92–239 (EPEEHQQTLQ…FKEARKDKGQ (148 aa)). Ca(2+) is bound by residues Asp-127 and Asp-133. A Phosphoserine modification is found at Ser-150. Residues Asp-206 and Asp-208 each coordinate Ca(2+). The interval 240–543 (DDFLGNVVLR…AKRVQDHTTV (304 aa)) is interaction with RAB27A. The 121-residue stretch at 557–677 (FQLYISLKEL…RLALVYCSLI (121 aa)) folds into the MHD1 domain. One can recognise an MHD2 domain in the interval 788-895 (EDAILPLMKF…ASSRELIRKY (108 aa)). The region spanning 910–1035 (ELGAVTVKAS…PGLSGSEEPG (126 aa)) is the C2 2 domain. Positions 940, 941, 947, 1005, 1007, and 1013 each coordinate Ca(2+). Residues 1026-1048 (PGLSGSEEPGEVPQTRLPLTYPA) form a disordered region.

This sequence belongs to the unc-13 family. As to quaternary structure, interacts with DOC2A. Interacts with RAB27A. Interacts with RHOG; the interaction increases RhoG affinity to the membrane lipids, targets UNC13D to membrane lipids and facilitates cytotoxic granule (CG) docking to the plasma membrane. It depends on Ca(2+) as a cofactor. Expressed at high levels in spleen, thymus and leukocytes. Also expressed in lung and placenta, and at very low levels in brain, heart, skeletal muscle and kidney. Expressed in cytotoxic T-lymphocytes (CTL) and mast cells.

The protein resides in the cytoplasm. The protein localises to the membrane. It localises to the late endosome. Its subcellular location is the recycling endosome. It is found in the lysosome. Plays a role in cytotoxic granule exocytosis in lymphocytes. Required for both granule maturation and granule docking and priming at the immunologic synapse. Regulates assembly of recycling and late endosomal structures, leading to the formation of an endosomal exocytic compartment that fuses with perforin-containing granules at the immunologic synapse and licences them for exocytosis. Regulates Ca(2+)-dependent secretory lysosome exocytosis in mast cells. The sequence is that of Protein unc-13 homolog D (UNC13D) from Homo sapiens (Human).